The sequence spans 651 residues: Chaperone protein HtpG (651 aa).

An a; substrate-binding region spans residues 1 to 353; that stretch reads MAAHVEQLEF…AQDMSLNVSR (353 aa). The segment at 354–569 is b; the sequence is EILQQDRQIR…TFGITPALAR (216 aa). The tract at residues 570 to 651 is c; that stretch reads MYRASGQPVP…RLTRTVGDQT (82 aa).

Belongs to the heat shock protein 90 family. Homodimer.

Its subcellular location is the cytoplasm. In terms of biological role, molecular chaperone. Has ATPase activity. This Mycolicibacterium vanbaalenii (strain DSM 7251 / JCM 13017 / BCRC 16820 / KCTC 9966 / NRRL B-24157 / PYR-1) (Mycobacterium vanbaalenii) protein is Chaperone protein HtpG.